We begin with the raw amino-acid sequence, 112 residues long: C-type natriuretic peptide 3 (112 aa).

A signal peptide spans 1–19; that stretch reads MSLRAFMLCVCLLLQSVGA. Positions 20–90 are excised as a propeptide; the sequence is RPASELQNLE…SKRSWGRYKK (71 aa). The disordered stretch occupies residues 33-67; that stretch reads QDQLSSTEHPEEDRLDRTREEPQLGGSSSREAADE. Over residues 40-54 the composition is skewed to basic and acidic residues; that stretch reads EHPEEDRLDRTREEP. Residues cysteine 96 and cysteine 112 are joined by a disulfide bond.

Belongs to the natriuretic peptide family. As to expression, spinal cord, kidney, ovary, heart and spleen, and to a lower extent in brain and liver.

Its subcellular location is the secreted. Functionally, exhibits natriuretic and vasodepressant activity. Has cGMP-stimulating activity. May help to regulate body fluid homeostasis in a variety of aquatic environments. The polypeptide is C-type natriuretic peptide 3 (Oryzias latipes (Japanese rice fish)).